A 66-amino-acid chain; its full sequence is MAVPKKKTSKSRRNMRRSHLALGKVNVIVDSQTGEYKLPHHVSLIDGTYNNRQVVTKKIETEEEVA.

Belongs to the bacterial ribosomal protein bL32 family.

The sequence is that of Large ribosomal subunit protein bL32 from Rickettsia bellii (strain OSU 85-389).